Consider the following 147-residue polypeptide: uncharacterized protein (147 aa).

Residues 44–147 (LVGYIDKEIH…LKSIKERLSI (104 aa)) form the HTH LytTR-type domain.

It localises to the cytoplasm. This is an uncharacterized protein from Staphylococcus aureus (strain MRSA252).